The following is a 477-amino-acid chain: Trigger factor (477 aa).

The PPIase FKBP-type domain maps to 174 to 261 (GDIAVVSFKG…LKDLKEKELP (88 aa)). The disordered stretch occupies residues 435-477 (VNEKTTKTSKATKTSKTTKATKTATKTTKTTKTTKTQNKKEKK). Residues 442–470 (TSKATKTSKTTKATKTATKTTKTTKTTKT) are compositionally biased toward low complexity.

It belongs to the FKBP-type PPIase family. Tig subfamily.

The protein resides in the cytoplasm. The catalysed reaction is [protein]-peptidylproline (omega=180) = [protein]-peptidylproline (omega=0). Involved in protein export. Acts as a chaperone by maintaining the newly synthesized protein in an open conformation. Functions as a peptidyl-prolyl cis-trans isomerase. The chain is Trigger factor from Prochlorococcus marinus (strain MIT 9301).